Reading from the N-terminus, the 638-residue chain is Growth hormone receptor (638 aa).

An N-terminal signal peptide occupies residues 1-18 (MDLWRVFLTLALAVSSDM). Residues 19–265 (FPGSGATPAT…TLAACEEDFR (247 aa)) are Extracellular-facing. 2 disulfides stabilise this stretch: Cys56/Cys66 and Cys101/Cys112. Asn115 is a glycosylation site (N-linked (GlcNAc...) asparagine). A disulfide bridge connects residues Cys126 and Cys140. The 104-residue stretch at 151–254 (PPIGLNWTLL…EVLRVTFPQM (104 aa)) folds into the Fibronectin type-III domain. Residues Asn156, Asn161, and Asn200 are each glycosylated (N-linked (GlcNAc...) asparagine). Residues 240–244 (YSEFS) carry the WSXWS motif motif. A helical membrane pass occupies residues 266-289 (FPWFLIIIFGIFGVAVMLFVVIFS). The Cytoplasmic segment spans residues 290 to 638 (KQQRIKMLIL…STDQLNKIMQ (349 aa)). A required for JAK2 binding region spans residues 295–380 (KMLILPPVPV…QEKSAGILGA (86 aa)). A Box 1 motif motif is present at residues 298–306 (ILPPVPVPK). The short motif at 341-350 (DSWVEFIELD) is the UbE motif element. Ser342 bears the Phosphoserine mark. Positions 357–389 (KTEESDTDRLLSDDQEKSAGILGAKDDDSGRTS) are disordered. The span at 363–373 (TDRLLSDDQEK) shows a compositional bias: basic and acidic residues. 2 positions are modified to phosphotyrosine: Tyr487 and Tyr594.

It belongs to the type I cytokine receptor family. Type 1 subfamily. In terms of assembly, on growth hormone (GH) binding, forms homodimers and binds JAK2 via a box 1-containing domain. The soluble form (GHBP) is produced by phorbol ester-promoted proteolytic cleavage at the cell surface (shedding) by ADAM17/TACE. Shedding is inhibited by growth hormone (GH) binding to the receptor probably due to a conformational change in GHR rendering the receptor inaccessible to ADAM17. Post-translationally, on GH binding, phosphorylated on tyrosine residues in the cytoplasmic domain by JAK2. Phosphorylation on either (or all of) Tyr-534, Tyr-566 and/or Tyr-627 is required for STAT5 activation. Phosphorylation on Tyr-333 would seem necessary for JAK2 activation. In terms of processing, ubiquitinated by the ECS(SOCS2) complex following ligand-binding and phosphorylation by JAK2, leading to its degradation by the proteasome. Regulation by the ECS(SOCS2) complex acts as a negative feedback loop of growth hormone receptor signaling. Ubiquitination is not sufficient for GHR internalization. As to expression, highest expression in liver. Also expressed in heart, kidney and muscle.

It is found in the cell membrane. Its subcellular location is the secreted. Its function is as follows. Receptor for pituitary gland growth hormone involved in regulating postnatal body growth. On ligand binding, couples to, and activates the JAK2/STAT5 pathway. Receptor for pituitary gland growth hormone (GH1) involved in regulating postnatal body growth. On ligand binding, couples to the JAK2/STAT5 pathway. Functionally, the soluble form (GHBP) acts as a reservoir of growth hormone in plasma and may be a modulator/inhibitor of GH signaling. This chain is Growth hormone receptor (Ghr), found in Rattus norvegicus (Rat).